The following is a 238-amino-acid chain: ATP synthase subunit a (238 aa).

Transmembrane regions (helical) follow at residues 15-35 (IFNL…FVFI), 76-96 (YSLF…LGLM), 111-131 (PTAN…LTHI), 167-187 (LALR…LLLL), and 208-230 (AFSV…VYLG).

This sequence belongs to the ATPase A chain family. As to quaternary structure, F-type ATPases have 2 components, CF(1) - the catalytic core - and CF(0) - the membrane proton channel. CF(1) has five subunits: alpha(3), beta(3), gamma(1), delta(1), epsilon(1). CF(0) has three main subunits: a(1), b(2) and c(9-12). The alpha and beta chains form an alternating ring which encloses part of the gamma chain. CF(1) is attached to CF(0) by a central stalk formed by the gamma and epsilon chains, while a peripheral stalk is formed by the delta and b chains.

The protein resides in the cell membrane. Its function is as follows. Key component of the proton channel; it plays a direct role in the translocation of protons across the membrane. This is ATP synthase subunit a from Streptococcus pneumoniae (strain ATCC BAA-255 / R6).